The primary structure comprises 95 residues: Small ribosomal subunit protein bS6 (95 aa).

It belongs to the bacterial ribosomal protein bS6 family.

Its function is as follows. Binds together with bS18 to 16S ribosomal RNA. The polypeptide is Small ribosomal subunit protein bS6 (Geobacillus sp. (strain WCH70)).